Consider the following 367-residue polypeptide: Glutamate 5-kinase (367 aa).

Lysine 9 provides a ligand contact to ATP. Substrate contacts are provided by serine 49, aspartate 136, and asparagine 148. ATP contacts are provided by residues 168–169 (TD) and 210–216 (TGGMKSK). In terms of domain architecture, PUA spans 276–350 (SGQIEIDAGA…GMQSQQIQAR (75 aa)).

The protein belongs to the glutamate 5-kinase family.

The protein localises to the cytoplasm. The enzyme catalyses L-glutamate + ATP = L-glutamyl 5-phosphate + ADP. It participates in amino-acid biosynthesis; L-proline biosynthesis; L-glutamate 5-semialdehyde from L-glutamate: step 1/2. Functionally, catalyzes the transfer of a phosphate group to glutamate to form L-glutamate 5-phosphate. The sequence is that of Glutamate 5-kinase from Bacillus anthracis.